We begin with the raw amino-acid sequence, 853 residues long: Aryl hydrocarbon receptor (853 aa).

A propeptide spanning residues 1 to 9 (MSSGANITY) is cleaved from the precursor. Residues 1-38 (MSSGANITYASRKRRKPVQKTVKPVPAEGIKSNPSKRH) are disordered. 2 consecutive short sequence motifs (nuclear localization signal) follow at residues 12–15 (RKRR) and 36–41 (KRHRDR). The 54-residue stretch at 26-79 (PAEGIKSNPSKRHRDRLNTELDRLASLLPFPQDVINKLDKLSVLRLSVSYLRAK) folds into the bHLH domain. The tract at residues 37–65 (RHRDRLNTELDRLASLLPFPQDVINKLDK) is DNA-binding. 3 required for maintaining the overall integrity of the AHR:ARNT heterodimer and its transcriptional activity regions span residues 49–81 (LASLLPFPQDVINKLDKLSVLRLSVSYLRAKSF), 116–124 (LLQALNGFV), and 264–266 (FAI). A Nuclear export signal motif is present at residues 63 to 71 (LDKLSVLRL). A PAS 1 domain is found at 116 to 179 (LLQALNGFVL…RQLHWALNPS (64 aa)). Residues 273 to 340 (PSILEIRTKN…CAESHIRMIK (68 aa)) form the PAS 2 domain. The PAC domain occupies 346–384 (MTVFRLLAKHSRWRWVQSNARLIYRNGRPDYIIATQRPL). The disordered stretch occupies residues 429–451 (TKSNTSRKDWAPQSTPSKDSFHP). The span at 440 to 451 (PQSTPSKDSFHP) shows a compositional bias: polar residues.

As to quaternary structure, homodimer. Heterodimer; efficient DNA binding requires dimerization with another bHLH protein. Interacts with ARNT; the heterodimer ARNT:AHR binds to core DNA sequence 5'-TGCGTG-3' within the dioxin response element (DRE) of target gene promoters and activates their transcription. Binds MYBBP1A. Interacts with coactivators including SRC-1, RIP140 and NOCA7, and with the corepressor SMRT. Interacts with NEDD8 and IVNS1ABP. Interacts with BMAL1. Interacts with HSP90AB1. Interacts with TIPARP; leading to mono-ADP-ribosylation of AHR and subsequent inhibition of AHR. Post-translationally, mono-ADP-ribosylated, leading to inhibit transcription activator activity of AHR. Expressed in all tissues tested including brain, heart, kidney, liver, lung, spleen, skeletal muscle and thymus.

Its subcellular location is the cytoplasm. The protein localises to the nucleus. Its function is as follows. Ligand-activated transcription factor that enables cells to adapt to changing conditions by sensing compounds from the environment, diet, microbiome and cellular metabolism, and which plays important roles in development, immunity and cancer. Upon ligand binding, translocates into the nucleus, where it heterodimerizes with ARNT and induces transcription by binding to xenobiotic response elements (XRE). Regulates a variety of biological processes, including angiogenesis, hematopoiesis, drug and lipid metabolism, cell motility and immune modulation. Xenobiotics can act as ligands: upon xenobiotic-binding, activates the expression of multiple phase I and II xenobiotic chemical metabolizing enzyme genes (such as the CYP1A1 gene). Mediates biochemical and toxic effects of halogenated aromatic hydrocarbons. Next to xenobiotics, natural ligands derived from plants, microbiota, and endogenous metabolism are potent AHR agonists. Tryptophan (Trp) derivatives constitute an important class of endogenous AHR ligands. Acts as a negative regulator of anti-tumor immunity: indoles and kynurenic acid generated by Trp catabolism act as ligand and activate AHR, thereby promoting AHR-driven cancer cell motility and suppressing adaptive immunity. Regulates the circadian clock by inhibiting the basal and circadian expression of the core circadian component PER1. Inhibits PER1 by repressing the CLOCK-BMAL1 heterodimer mediated transcriptional activation of PER1. The heterodimer ARNT:AHR binds to core DNA sequence 5'-TGCGTG-3' within the dioxin response element (DRE) of target gene promoters and activates their transcription. The polypeptide is Aryl hydrocarbon receptor (Ahr) (Rattus norvegicus (Rat)).